Reading from the N-terminus, the 292-residue chain is uncharacterized protein (292 aa).

Lys8 participates in a covalent cross-link: Glycyl lysine isopeptide (Lys-Gly) (interchain with G-Cter in SUMO2). Residues 47-67 (TKRKMLPSSSSRMRSDGFDEE) are disordered. Lys76 participates in a covalent cross-link: Glycyl lysine isopeptide (Lys-Gly) (interchain with G-Cter in SUMO2). A Phosphothreonine modification is found at Asn94. 2 positions are modified to phosphoserine: Lys96 and Phe97. Residues 122-292 (ETDSDQQDIT…ERSAESSEDD (171 aa)) form a disordered region. At Thr123 the chain carries Phosphothreonine. Phosphoserine occurs at positions 125 and 126. The segment covering 128–140 (QDITNGKKTSPQV) has biased composition (polar residues). Positions 147 to 173 (SRKHKKSKKSHKKKQKKRSHKKQKKSK) are enriched in basic residues. Polar residues predominate over residues 180–194 (TADSSSEFSEETGAS). 2 stretches are compositionally biased toward basic residues: residues 197-215 (RKGK…KSLK) and 247-259 (KKTK…KKAH). Residues 280 to 292 (ATDERSAESSEDD) are compositionally biased toward basic and acidic residues.

This is an uncharacterized protein from Homo sapiens (Human).